We begin with the raw amino-acid sequence, 373 residues long: GTPase Obg (373 aa).

Residues 1 to 158 (MFVDSVELLI…KQVRLEMKLI (158 aa)) form the Obg domain. The disordered stretch occupies residues 62 to 83 (NHIKAENGRPGEGRKKYGRKGQ). Basic and acidic residues predominate over residues 64 to 76 (IKAENGRPGEGRK). Residues 159 to 362 (ADVGLVGYPN…LRYALGDFVK (204 aa)) form the OBG-type G domain. GTP is bound by residues 165-172 (GYPNVGKS), 190-194 (FTTLT), 212-215 (DIPG), 280-283 (TKID), and 343-345 (SSV). Mg(2+)-binding residues include Ser172 and Thr192.

The protein belongs to the TRAFAC class OBG-HflX-like GTPase superfamily. OBG GTPase family. In terms of assembly, monomer. It depends on Mg(2+) as a cofactor.

It is found in the cytoplasm. An essential GTPase which binds GTP, GDP and possibly (p)ppGpp with moderate affinity, with high nucleotide exchange rates and a fairly low GTP hydrolysis rate. Plays a role in control of the cell cycle, stress response, ribosome biogenesis and in those bacteria that undergo differentiation, in morphogenesis control. In Sulfurovum sp. (strain NBC37-1), this protein is GTPase Obg.